Consider the following 841-residue polypeptide: Auxin response factor 24 (841 aa).

The tract at residues L109–T140 is disordered. A DNA-binding region (TF-B3) is located at residues F148–M250. Disordered regions lie at residues P366 to R397, Q663 to C715, and G804 to C841. Positions A684–S695 are enriched in basic and acidic residues. Composition is skewed to polar residues over residues K701–R713 and G830–C841. The 85-residue stretch at R713–E797 folds into the PB1 domain.

It belongs to the ARF family. As to quaternary structure, homodimers and heterodimers. Expressed in roots, culms, leaves and young panicles.

It is found in the nucleus. Functionally, auxin response factors (ARFs) are transcriptional factors that bind specifically to the DNA sequence 5'-TGTCTC-3' found in the auxin-responsive promoter elements (AuxREs). In Oryza sativa subsp. japonica (Rice), this protein is Auxin response factor 24 (ARF24).